The following is a 362-amino-acid chain: Divinyl chlorophyll a/b light-harvesting protein PcbF (362 aa).

6 helical membrane passes run 27 to 47 (FIGS…ANTL), 89 to 109 (IAFI…AGLL), 150 to 170 (FILG…VEWA), 211 to 231 (VMGG…FHIA), 251 to 271 (AVLS…AFWC), and 316 to 336 (LANV…WHAI).

Belongs to the PsbB/PsbC family. IsiA/Pcb subfamily. As to quaternary structure, the antenna complex consists of divinyl chlorophylls (a and b) and divinyl chlorophyll a/b binding proteins and binds more divinyl chlorophyll b than does the antenna complex from high-light-adapted Prochlorococcus. Divinyl chlorophyll a serves as cofactor. It depends on divinyl chlorophyll b as a cofactor.

It is found in the cellular thylakoid membrane. Functionally, the antenna complex functions as a light receptor, it captures and delivers excitation energy to photosystems II and I. The Prochlorales pcb genes are not related to higher plant LHCs. This chain is Divinyl chlorophyll a/b light-harvesting protein PcbF (pcbF), found in Prochlorococcus marinus (strain NATL2A).